We begin with the raw amino-acid sequence, 169 residues long: Mu-like prophage FluMu host-nuclease inhibitor protein gam (169 aa).

To phage Mu protein gam.

In terms of biological role, protects linear double-stranded DNA of Mu genome from exonuclease degradation. This Haemophilus influenzae (strain ATCC 51907 / DSM 11121 / KW20 / Rd) protein is Mu-like prophage FluMu host-nuclease inhibitor protein gam.